The chain runs to 1399 residues: DNA-directed RNA polymerase subunit beta' (1399 aa).

Positions 70, 72, 85, and 88 each coordinate Zn(2+). Residues D460, D462, and D464 each coordinate Mg(2+). 4 residues coordinate Zn(2+): C814, C888, C895, and C898. The interval 1367 to 1399 (SERKRQRDLGKPQRVSASEAEAALTEALNSSGN) is disordered. Positions 1382 to 1399 (SASEAEAALTEALNSSGN) are enriched in low complexity.

It belongs to the RNA polymerase beta' chain family. The RNAP catalytic core consists of 2 alpha, 1 beta, 1 beta' and 1 omega subunit. When a sigma factor is associated with the core the holoenzyme is formed, which can initiate transcription. Mg(2+) serves as cofactor. It depends on Zn(2+) as a cofactor.

It catalyses the reaction RNA(n) + a ribonucleoside 5'-triphosphate = RNA(n+1) + diphosphate. In terms of biological role, DNA-dependent RNA polymerase catalyzes the transcription of DNA into RNA using the four ribonucleoside triphosphates as substrates. The protein is DNA-directed RNA polymerase subunit beta' of Pseudomonas paraeruginosa (strain DSM 24068 / PA7) (Pseudomonas aeruginosa (strain PA7)).